We begin with the raw amino-acid sequence, 117 residues long: Conotoxin vil14.2 (117 aa).

An N-terminal signal peptide occupies residues M1 to F22. Positions E23–R90 are excised as a propeptide. Residues R53–R77 form a disordered region. A compositionally biased stretch (basic and acidic residues) spans R62 to R77. 2 disulfide bridges follow: C96–C116 and C100–C112.

This sequence belongs to the conotoxin R superfamily. As to expression, expressed by the venom duct.

It localises to the secreted. In Conus villepinii (Villepin's cone), this protein is Conotoxin vil14.2.